A 164-amino-acid polypeptide reads, in one-letter code: S-ribosylhomocysteine lyase (164 aa).

Residues H61, H65, and C131 each coordinate Fe cation.

The protein belongs to the LuxS family. In terms of assembly, homodimer. Requires Fe cation as cofactor.

The catalysed reaction is S-(5-deoxy-D-ribos-5-yl)-L-homocysteine = (S)-4,5-dihydroxypentane-2,3-dione + L-homocysteine. Involved in the synthesis of autoinducer 2 (AI-2) which is secreted by bacteria and is used to communicate both the cell density and the metabolic potential of the environment. The regulation of gene expression in response to changes in cell density is called quorum sensing. Catalyzes the transformation of S-ribosylhomocysteine (RHC) to homocysteine (HC) and 4,5-dihydroxy-2,3-pentadione (DPD). The polypeptide is S-ribosylhomocysteine lyase (Bifidobacterium longum subsp. infantis (strain ATCC 15697 / DSM 20088 / JCM 1222 / NCTC 11817 / S12)).